A 103-amino-acid chain; its full sequence is Large ribosomal subunit protein bL21 (103 aa).

Belongs to the bacterial ribosomal protein bL21 family. As to quaternary structure, part of the 50S ribosomal subunit. Contacts protein L20.

Its function is as follows. This protein binds to 23S rRNA in the presence of protein L20. In Mycobacterium tuberculosis (strain ATCC 25618 / H37Rv), this protein is Large ribosomal subunit protein bL21.